The following is a 315-amino-acid chain: Ribosomal RNA small subunit methyltransferase H (315 aa).

Residues 35–37, aspartate 55, phenylalanine 84, aspartate 105, and glutamine 112 each bind S-adenosyl-L-methionine; that span reads AGH.

Belongs to the methyltransferase superfamily. RsmH family.

The protein localises to the cytoplasm. The catalysed reaction is cytidine(1402) in 16S rRNA + S-adenosyl-L-methionine = N(4)-methylcytidine(1402) in 16S rRNA + S-adenosyl-L-homocysteine + H(+). Functionally, specifically methylates the N4 position of cytidine in position 1402 (C1402) of 16S rRNA. This Streptococcus agalactiae serotype Ia (strain ATCC 27591 / A909 / CDC SS700) protein is Ribosomal RNA small subunit methyltransferase H.